The following is a 281-amino-acid chain: MSAVNWVFTLNFAGEVPVLSFDERVQYAVWQHERVNHDHIQGVIQLKKKAKMNTVKNIIGGNPHLEKMKGSIEEASAYAQKEESRVAGPWSYGELLKKGSHKRKIMELIKDPENELEEPQKYRRAMAWSAMDESRKLAEEGGFPYTLYSWQETVLGLLEEEPNDRIIIWVYGPNGNEGKSQFGKFLGLKKDYLYLPGGKTQDMTYMLMKNPKANVVMDIPRCNSEYLNYQFMELIKNRTIFSYKYEPVGCIINNKIHVIVLANVLPDYEKISQDRIKIIYC.

The CRESS-DNA virus Rep endonuclease domain occupies 1 to 95; it reads MSAVNWVFTL…VAGPWSYGEL (95 aa). Residues 7-10 carry the RCR-1 motif; that stretch reads VFTL. Glu-33 and His-39 together coordinate a divalent metal cation. The RCR-2 motif lies at 39–41; the sequence is HIQ. A Nuclear localization signal motif is present at residues 48–69; sequence KKAKMNTVKNIIGGNPHLEKMK. Tyr-78 functions as the For DNA cleavage activity in the catalytic mechanism. The RCR-3 motif lies at 78–81; the sequence is YAQK. Glu-83 serves as a coordination point for a divalent metal cation. Positions 95-101 match the Nuclear localization signal motif; it reads LLKKGSH. 178–180 contributes to the ATP binding site; sequence GKS.

It belongs to the nanoviridea/circoviridae replication-associated protein family. Homooligomer (Potential). Rep binds to repeated DNA motifs (iterons). Mg(2+) serves as cofactor. The cofactor is Mn(2+).

It localises to the host nucleus. The enzyme catalyses ATP + H2O = ADP + phosphate + H(+). In terms of biological role, initiates and terminates the replication only of its own subviral DNA molecule. The closed circular ssDNA genome is first converted to a superhelical dsDNA. Rep binds a specific hairpin at the genome origin of replication. Introduces an endonucleolytic nick within the intergenic region of the genome, thereby initiating the rolling circle replication (RCR). Following cleavage, binds covalently to the 5'-phosphate of DNA as a tyrosyl ester. The cleavage gives rise to a free 3'-OH that serves as a primer for the cellular DNA polymerase. The polymerase synthesizes the (+) strand DNA by rolling circle mechanism. After one round of replication, a Rep-catalyzed nucleotidyl transfer reaction releases a circular single-stranded virus genome, thereby terminating the replication. Displays origin-specific DNA cleavage, nucleotidyl transferase, ATPase and helicase activities. This is Para-Rep C9 (C9) from Faba bean necrotic yellows C9 alphasatellite (FBNYC9A).